The following is a 1114-amino-acid chain: OTU domain-containing protein 4 (1114 aa).

M1 carries the N-acetylmethionine modification. The tract at residues 1 to 22 (MEAAVGVPDGGDQGGAGPREDA) is disordered. A compositionally biased stretch (gly residues) spans 8-17 (PDGGDQGGAG). The OTU domain maps to 34–155 (LYRKLVAKDG…GNHYDIVYPI (122 aa)). A cys-loop region spans residues 39–45 (VAKDGSC). Residue D42 is part of the active site. C45 serves as the catalytic Nucleophile. Positions 94-104 (LENPQEWVGQV) are variable-loop. Position 120 is a phosphotyrosine (Y120). Residues S126 and S128 each carry the phosphoserine modification. A Phosphothreonine modification is found at T131. A his-loop region spans residues 143–148 (FSNGNH). H148 is an active-site residue. S166, S199, S202, S204, and S341 each carry phosphoserine. The interval 323 to 449 (KHTSKNLKAP…FGLSPEERRE (127 aa)) is disordered. The span at 392-404 (FSSHSSGSQSQKF) shows a compositional bias: low complexity. Positions 420–435 (RKPDRERVEDFDHTSR) are enriched in basic and acidic residues. At Y439 the chain carries Phosphotyrosine. Position 443 is a phosphoserine (S443). A Phosphotyrosine modification is found at Y460. The segment at 472–567 (ALSSSSVNQS…PAEQKPAEHV (96 aa)) is disordered. Residues 474–487 (SSSSVNQSASQSSN) are compositionally biased toward low complexity. Over residues 496–529 (HVGDRKGSRRRMDTEERKDKDSIHGHSQLDKRPE) the composition is skewed to basic and acidic residues. Residues S546, S893, and S900 each carry the phosphoserine modification. The interval 911 to 1114 (EFPEARGEHV…MGDGHRGQHT (204 aa)) is disordered. 2 stretches are compositionally biased toward basic and acidic residues: residues 913–922 (PEARGEHVHS) and 969–1000 (NRERETVPVELEPKRTIQSLKEKTEKVKDPKT). 5 positions are modified to phosphoserine: S1006, S1011, S1014, S1023, and S1024. Over residues 1039–1048 (SKQFYNQTYG) the composition is skewed to polar residues. Residue S1049 is modified to Phosphoserine. Basic and acidic residues-rich tracts occupy residues 1067–1086 (VRSEESWKGQPSRSRDEGYQ) and 1096–1114 (FRGDRRRSGMGDGHRGQHT).

In terms of assembly, interacts with MYD88; the interaction is direct. Interacts with ALKBH3; the interaction is direct. Interacts with USP7; the interaction is direct. Interacts with USP9X; the interaction is direct. Post-translationally, phosphorylated on Ser-202 and Ser-204 likely by CSNK2A1-CSNK2A2 serine/threonine-protein kinase complex. Activates 'Lys-63'-specific deubiquitinase activity.

It localises to the cytoplasm. Its subcellular location is the nucleus. It catalyses the reaction Thiol-dependent hydrolysis of ester, thioester, amide, peptide and isopeptide bonds formed by the C-terminal Gly of ubiquitin (a 76-residue protein attached to proteins as an intracellular targeting signal).. Its activity is regulated as follows. Phosphorylation on Ser-202 and Ser-204 induces 'Lys-63'-specific deubiquitinase activity. Functionally, deubiquitinase which hydrolyzes the isopeptide bond between the ubiquitin C-terminus and the lysine epsilon-amino group of the target protein. May negatively regulate inflammatory and pathogen recognition signaling in innate immune response. Upon phosphorylation at Ser-202 and Ser-204 residues, via IL-1 receptor and Toll-like receptor signaling pathway, specifically deubiquitinates 'Lys-63'-polyubiquitinated MYD88 adapter protein triggering down-regulation of NF-kappa-B-dependent transcription of inflammatory mediators. Independently of the catalytic activity, acts as a scaffold for alternative deubiquitinases to assemble specific deubiquitinase-substrate complexes. Associates with USP7 and USP9X deubiquitinases to stabilize alkylation repair enzyme ALKBH3, thereby promoting the repair of alkylated DNA lesions. The protein is OTU domain-containing protein 4 of Homo sapiens (Human).